We begin with the raw amino-acid sequence, 146 residues long: Large ribosomal subunit protein uL16 (146 aa).

The protein belongs to the universal ribosomal protein uL16 family. In terms of assembly, part of the 50S ribosomal subunit.

Its function is as follows. Binds 23S rRNA and is also seen to make contacts with the A and possibly P site tRNAs. This chain is Large ribosomal subunit protein uL16, found in Lactobacillus acidophilus (strain ATCC 700396 / NCK56 / N2 / NCFM).